The sequence spans 331 residues: Vitamin B12 import system permease protein BtuC (331 aa).

The next 7 helical transmembrane spans lie at 21-43, 63-85, 90-112, 116-138, 151-173, 193-210, and 239-261; these read LALL…ERWI, PRTL…MQAV, LAEP…TVLL, LLPV…FLLL, LLIG…YFST, WRHG…LWLS, and VLVL…IAFI.

The protein belongs to the binding-protein-dependent transport system permease family. FecCD subfamily. As to quaternary structure, the complex is composed of two ATP-binding proteins (BtuD), two transmembrane proteins (BtuC) and a solute-binding protein (BtuF).

The protein localises to the cell inner membrane. Part of the ABC transporter complex BtuCDF involved in vitamin B12 import. Involved in the translocation of the substrate across the membrane. This is Vitamin B12 import system permease protein BtuC from Pectobacterium atrosepticum (strain SCRI 1043 / ATCC BAA-672) (Erwinia carotovora subsp. atroseptica).